Here is a 129-residue protein sequence, read N- to C-terminus: Small ribosomal subunit protein uS8my (129 aa).

The protein belongs to the universal ribosomal protein uS8 family. Component of the mitochondrial ribosome small subunit.

The protein resides in the mitochondrion. This Arabidopsis thaliana (Mouse-ear cress) protein is Small ribosomal subunit protein uS8my (RPS15AE).